Reading from the N-terminus, the 286-residue chain is MELIIMSGRSGSGKSVALRALEDLGYYCVDNIPLALIPQLTDYLEKLKRSVVVSLDVRNLPEDPDVLEQVLHAFPSHISKTLIFLDCQRKALVRRYSDSRRLHPLSTHDLSLENVIDLENHLLEPLFQHADYIIDTTYFSSHELAEKLRELLNGSSEKELNIIVESFGFKYGIPADADYVFDVRFLPNPHWNLELRPMTGLEKPVIDFLENQSEVHQFISHTCNYLEVWLPLLEQNNRSYLTIAIGCTGGKHRSVFVAEKLARYIESKGKKVRVRHCSLEKHYKTS.

8-15 (GRSGSGKS) provides a ligand contact to ATP. A GTP-binding site is contributed by 56-59 (DVRN).

It belongs to the RapZ-like family.

In terms of biological role, displays ATPase and GTPase activities. The polypeptide is Nucleotide-binding protein HAPS_0087 (Glaesserella parasuis serovar 5 (strain SH0165) (Haemophilus parasuis)).